The sequence spans 625 residues: Arginine--tRNA ligase (625 aa).

A 'HIGH' region motif is present at residues 128 to 138; sequence VNPTKPLHMGH.

The protein belongs to the class-I aminoacyl-tRNA synthetase family.

The protein resides in the cytoplasm. The catalysed reaction is tRNA(Arg) + L-arginine + ATP = L-arginyl-tRNA(Arg) + AMP + diphosphate. The protein is Arginine--tRNA ligase (argS) of Pyrococcus abyssi (strain GE5 / Orsay).